We begin with the raw amino-acid sequence, 273 residues long: Putative pyruvate, phosphate dikinase regulatory protein (273 aa).

151–158 (GVSRTSKT) provides a ligand contact to ADP.

This sequence belongs to the pyruvate, phosphate/water dikinase regulatory protein family. PDRP subfamily.

It catalyses the reaction N(tele)-phospho-L-histidyl/L-threonyl-[pyruvate, phosphate dikinase] + ADP = N(tele)-phospho-L-histidyl/O-phospho-L-threonyl-[pyruvate, phosphate dikinase] + AMP + H(+). It carries out the reaction N(tele)-phospho-L-histidyl/O-phospho-L-threonyl-[pyruvate, phosphate dikinase] + phosphate + H(+) = N(tele)-phospho-L-histidyl/L-threonyl-[pyruvate, phosphate dikinase] + diphosphate. Functionally, bifunctional serine/threonine kinase and phosphorylase involved in the regulation of the pyruvate, phosphate dikinase (PPDK) by catalyzing its phosphorylation/dephosphorylation. The protein is Putative pyruvate, phosphate dikinase regulatory protein of Desulfitobacterium hafniense (strain Y51).